A 297-amino-acid chain; its full sequence is HTH-type transcriptional regulator ArgP (297 aa).

An HTH lysR-type domain is found at 4–60 (PDYRTLQALDAVIRERGFERAAQKLCITQSAVSQRIKQLENLFGQPLLVRTVPPRPT). The H-T-H motif DNA-binding region spans 21 to 40 (FERAAQKLCITQSAVSQRIK).

The protein belongs to the LysR transcriptional regulatory family. Homodimer.

Its function is as follows. Controls the transcription of genes involved in arginine and lysine metabolism. The chain is HTH-type transcriptional regulator ArgP from Serratia proteamaculans (strain 568).